We begin with the raw amino-acid sequence, 720 residues long: Putative glutamine--fructose-6-phosphate aminotransferase [isomerizing] (720 aa).

The Nucleophile; for GATase activity role is filled by C2. The region spanning 2–321 is the Glutamine amidotransferase type-2 domain; that stretch reads CGIFGYCNFL…DNDIAHIYDG (320 aa). The span at 266 to 280 shows a compositional bias: polar residues; the sequence is STTSTFNHGSSTETP. The disordered stretch occupies residues 266–285; that stretch reads STTSTFNHGSSTETPAENGL. SIS domains lie at 393–532 and 565–710; these read WLTE…DLVS and CDKK…VDLP.

It carries out the reaction D-fructose 6-phosphate + L-glutamine = D-glucosamine 6-phosphate + L-glutamate. It functions in the pathway nucleotide-sugar biosynthesis; UDP-N-acetyl-alpha-D-glucosamine biosynthesis; alpha-D-glucosamine 6-phosphate from D-fructose 6-phosphate: step 1/1. Involved in amino sugar synthesis (formation of chitin, supplies the amino sugars of asparagine-linked oligosaccharides of glycoproteins). The sequence is that of Putative glutamine--fructose-6-phosphate aminotransferase [isomerizing] from Saccharomyces cerevisiae (strain RM11-1a) (Baker's yeast).